Reading from the N-terminus, the 303-residue chain is N-acetyl-D-glucosamine kinase (303 aa).

ATP is bound by residues 4 to 11 and 133 to 140; these read GFDIGGTK and GVGGGLIF. His157, Cys177, Cys179, and Cys184 together coordinate Zn(2+).

The protein belongs to the ROK (NagC/XylR) family. NagK subfamily.

It carries out the reaction N-acetyl-D-glucosamine + ATP = N-acetyl-D-glucosamine 6-phosphate + ADP + H(+). It participates in cell wall biogenesis; peptidoglycan recycling. In terms of biological role, catalyzes the phosphorylation of N-acetyl-D-glucosamine (GlcNAc) derived from cell-wall degradation, yielding GlcNAc-6-P. This is N-acetyl-D-glucosamine kinase from Shigella sonnei (strain Ss046).